The following is a 95-amino-acid chain: RING finger protein Z (95 aa).

The segment covering 1 to 17 (MGNCNRTQKPSSSSNNL) has biased composition (polar residues). Positions 1-25 (MGNCNRTQKPSSSSNNLEKPPQAAE) are disordered. Residue glycine 2 is the site of N-myristoyl glycine; by host attachment. Residues 40-76 (CKCCWFADKNLITCSDHYLCLRCHQIMLRNSELCNIC) form an RING-type; atypical zinc finger. An ASAP motif motif is present at residues 90-93 (ASAP).

The protein belongs to the arenaviridae Z protein family. Interacts with protein NP; this interaction probably directs the encapsidated genome to budding sites. Interacts (via RING domain) with polymerase L; this interaction inhibits viral transcription and replication, Z partially blocks the product exit tunnel for the releasing nascent RNA product. Interacts with the glycoprotein complex; this interaction plays a role in virion budding. Interacts with host eIF4E; this interaction results in eIF4E reduced affinity for its substrate, the 5'-m7 G cap structure. Interacts (via late-budding domain) with host TSG101; this interaction is essential for budding and release of viral particles. Interacts with host RPLP0; this interaction may serve to load ribosome-like particles inside the virion. Interacts with host PML; this interaction induces PML bodies redistribution in the cytoplasm upon viral infection. In terms of processing, myristoylation is required for the role of RING finger protein Z in assembly and budding.

The protein resides in the virion. Its subcellular location is the host cytoplasm. The protein localises to the host perinuclear region. It is found in the host cell membrane. Its function is as follows. Plays a crucial role in virion assembly and budding. Expressed late in the virus life cycle, it acts as an inhibitor of viral transcription and RNA synthesis by interacting with the viral polymerase L. Presumably recruits the NP encapsidated genome to cellular membranes at budding sites via direct interaction with NP. Plays critical roles in the final steps of viral release by interacting with host TSG101, a member of the vacuolar protein-sorting pathway and using other cellular host proteins involved in vesicle formation pathway. The budding of the virus progeny occurs after association of protein Z with the viral glycoprotein complex SSP-GP1-GP2 at the cell periphery, step that requires myristoylation of protein Z. Also selectively represses protein production by associating with host eIF4E. In cell-based minigenome assay, has an inhibitory effect on the ribonucleoprotein machinery (vRNP), which is responsible for the replication and transcription of the viral genome. This chain is RING finger protein Z, found in Tacaribe virus (strain Franze-Fernandez) (TCRV).